Consider the following 328-residue polypeptide: Malate dehydrogenase (328 aa).

11-17 (GAAGQIG) lines the NAD(+) pocket. Residues R92 and R98 each coordinate substrate. Residues N105, Q112, and 129–131 (VGN) contribute to the NAD(+) site. Residues N131 and R162 each coordinate substrate. Residue H187 is the Proton acceptor of the active site.

The protein belongs to the LDH/MDH superfamily. MDH type 2 family.

It carries out the reaction (S)-malate + NAD(+) = oxaloacetate + NADH + H(+). Functionally, catalyzes the reversible oxidation of malate to oxaloacetate. This is Malate dehydrogenase from Coxiella burnetii (strain CbuG_Q212) (Coxiella burnetii (strain Q212)).